We begin with the raw amino-acid sequence, 535 residues long: Zinc finger protein squeeze (535 aa).

Low complexity-rich tracts occupy residues 70 to 97 and 131 to 142; these read MVMEQQPHPDQQQQQHLHHPQQQQHPPQ and SSASGSGSNGSS. The tract at residues 70 to 157 is disordered; the sequence is MVMEQQPHPD…RRGDGDQAKP (88 aa). Over residues 145–156 the composition is skewed to basic and acidic residues; it reads EESRRGDGDQAK. 5 consecutive C2H2-type zinc fingers follow at residues 158 to 180, 186 to 208, 214 to 238, 244 to 266, and 275 to 297; these read YKCGSCSKSFANSSYLSQHTRIH, YRCEICQRKFTQLSHLQQHIRTH, YKCRHAGCPKAFSQLSNLQSHSRCH, FKCNSCYKCFSDEMTLLEHIPKH, and HICNLCGKSYTQETYLQKHLQKH. Position 395 is a phosphothreonine (threonine 395). 2 positions are modified to phosphoserine: serine 399 and serine 401. The segment at 417–475 is disordered; the sequence is TPQHHLQQQQQQQQQQQAQQQQQAQHQPSPGPGNSAFTPLSATVAPPPHLQQHRGPPGS. Positions 419 to 443 are enriched in low complexity; it reads QHHLQQQQQQQQQQQAQQQQQAQHQ. Serine 475 bears the Phosphoserine mark. 2 positions are modified to phosphotyrosine: tyrosine 479 and tyrosine 481.

The protein belongs to the krueppel C2H2-type zinc-finger protein family. As to quaternary structure, interacts with nab; which acts as a coactivator. Interacts with ap. In terms of tissue distribution, largely restricted to subsets of cells in the CNS throughout embryonic and first instar larval (L1) development. Expressed in a population of lateral interneurons, primarily projecting axons in the anterior and posterior commissures. Overlaps with ap within the thoracic ap cluster. By stage 17, it is restricted to 2 neurons within the ap-cluster, with one neuron typically continuing to display higher levels of expression. Selectively expressed at higher levels within the FMRFa Tv neurons. Expressed in all leucokinergic cells.

The protein resides in the nucleus. Transcription factor involved in neuronal fate specification. First required in embryonic CNS development to define the number of cells that express apterous (ap) in the ap thoracic cluster of interneurons. Later on, it plays a central role in the combinatorial code of transcription factors that specifies the fate of the Tv neuron in the ap cluster by participating in the transcription regulation of FMRFa in Tv cells. Also required for projection neuron dendritic targeting. This Drosophila melanogaster (Fruit fly) protein is Zinc finger protein squeeze (sqz).